We begin with the raw amino-acid sequence, 185 residues long: Tetratricopeptide repeat protein 36 homolog (185 aa).

3 TPR repeats span residues 53–86 (SREL…AQRA), 88–119 (VLNN…ANDQ), and 125–158 (CHAH…GSKF).

The protein belongs to the TTC36 family.

The sequence is that of Tetratricopeptide repeat protein 36 homolog from Drosophila melanogaster (Fruit fly).